The primary structure comprises 555 residues: Potassium-transporting ATPase potassium-binding subunit (555 aa).

Helical transmembrane passes span 2–22 (IWVA…PTGI), 60–80 (QYAL…YFIF), 130–150 (IGIT…VMAF), 173–193 (VFLP…VPQT), 246–266 (MSNI…PFTY), 278–298 (ILFV…TTSE), 374–394 (AGFV…GLMV), 412–432 (LIAV…ALAL), 483–503 (LVMF…AASL), and 525–545 (GIFI…MLVL).

This sequence belongs to the KdpA family. The system is composed of three essential subunits: KdpA, KdpB and KdpC.

The protein localises to the cell membrane. In terms of biological role, part of the high-affinity ATP-driven potassium transport (or Kdp) system, which catalyzes the hydrolysis of ATP coupled with the electrogenic transport of potassium into the cytoplasm. This subunit binds the extracellular potassium ions and delivers the ions to the membrane domain of KdpB through an intramembrane tunnel. This Bacillus thuringiensis subsp. konkukian (strain 97-27) protein is Potassium-transporting ATPase potassium-binding subunit.